Consider the following 106-residue polypeptide: MSRSQLWAAVVLLLLLQSAQGVYIKYHGFQVQLESVKKLNELEEKEMSNPQPRRSGLLPAVCHNPALPLDLQPVCASQEAASTFKALRTIATDECELCINVACTGC.

The N-terminal stretch at 1–21 (MSRSQLWAAVVLLLLLQSAQG) is a signal peptide. A propeptide spanning residues 22–91 (VYIKYHGFQV…STFKALRTIA (70 aa)) is cleaved from the precursor. Disulfide bonds link Cys-62/Cys-75, Cys-95/Cys-103, and Cys-98/Cys-106.

Belongs to the guanylin family. As to expression, localized predominantly in intestinal villi and the corticomedullary junction of the kidney.

The protein resides in the secreted. Endogenous activator of intestinal guanylate cyclase. It stimulates this enzyme through the same receptor binding region as the heat-stable enterotoxins. May be a potent physiological regulator of intestinal fluid and electrolyte transport. May be an autocrine/paracrine regulator of intestinal salt and water transport. The chain is Guanylate cyclase activator 2B (Guca2b) from Mus musculus (Mouse).